The primary structure comprises 31 residues: Ranatuerin-2PL (31 aa).

A disulfide bridge connects residues C23 and C29.

As to expression, expressed by the skin glands.

It is found in the secreted. Its function is as follows. Antimicrobial activity against Gram-negative bacterium E.coli. This is Ranatuerin-2PL from Lithobates palustris (Pickerel frog).